Here is a 913-residue protein sequence, read N- to C-terminus: E3 ubiquitin-protein ligase ZNRF3 (913 aa).

Residues 1–32 (MRPRSGGRPGAPGRRRRRLRRGPRGRRLPPPP) form a disordered region. Residues 1-52 (MRPRSGGRPGAPGRRRRRLRRGPRGRRLPPPPPLPLLLGLLLAAAGPGAARA) form the signal peptide. A compositionally biased stretch (basic residues) spans 13-27 (GRRRRRLRRGPRGRR). The Extracellular portion of the chain corresponds to 53–216 (KETAFVEVVL…PRQPTEYFDM (164 aa)). The chain crosses the membrane as a helical span at residues 217-237 (GIFLAFFVVVSLVCLILLVKI). The Cytoplasmic portion of the chain corresponds to 238-913 (KLKQRRSQNS…GSGPGIGTGA (676 aa)). Residues 290–331 (CAICLEKYIDGEELRVIPCTHRFHRKCVDPWLLQHHTCPHCR) form an RING-type; atypical zinc finger. Disordered regions lie at residues 601–669 (AVHL…GLEV) and 855–913 (REEE…GTGA). Polar residues-rich tracts occupy residues 634–664 (SGDQ…STSE) and 881–890 (ASLSSAPQDT). Over residues 903 to 913 (PGSGPGIGTGA) the composition is skewed to gly residues.

This sequence belongs to the ZNRF3 family. As to quaternary structure, interacts with LRP6, FZD4, FZD5, FZD6 and FZD8. Interacts with RSPO1; interaction promotes indirect interaction with LGR4 and membrane clearance of ZNRF3. Interacts with LMBR1L.

The protein resides in the cell membrane. The enzyme catalyses S-ubiquitinyl-[E2 ubiquitin-conjugating enzyme]-L-cysteine + [acceptor protein]-L-lysine = [E2 ubiquitin-conjugating enzyme]-L-cysteine + N(6)-ubiquitinyl-[acceptor protein]-L-lysine.. It functions in the pathway protein modification; protein ubiquitination. With respect to regulation, negatively regulated by R-spondin proteins such as RSPO1: interaction with RSPO1 induces the indirect association between ZNRF3 and LGR4, promoting membrane clearance of ZNRF3. Functionally, E3 ubiquitin-protein ligase that acts as a negative regulator of the Wnt signaling pathway by mediating the ubiquitination and subsequent degradation of Wnt receptor complex components Frizzled and LRP6. Acts on both canonical and non-canonical Wnt signaling pathway. Acts as a tumor suppressor in the intestinal stem cell zone by inhibiting the Wnt signaling pathway, thereby restricting the size of the intestinal stem cell zone. Along with RSPO2 and RNF43, constitutes a master switch that governs limb specification. This Mus musculus (Mouse) protein is E3 ubiquitin-protein ligase ZNRF3 (Znrf3).